The primary structure comprises 391 residues: 3-ketoacyl-CoA thiolase (391 aa).

Residue Cys-95 is the Acyl-thioester intermediate of the active site. Catalysis depends on proton acceptor residues His-347 and Cys-377.

It belongs to the thiolase-like superfamily. Thiolase family. As to quaternary structure, heterotetramer of two alpha chains (FadB) and two beta chains (FadA).

It localises to the cytoplasm. It carries out the reaction an acyl-CoA + acetyl-CoA = a 3-oxoacyl-CoA + CoA. It functions in the pathway lipid metabolism; fatty acid beta-oxidation. Its function is as follows. Catalyzes the final step of fatty acid oxidation in which acetyl-CoA is released and the CoA ester of a fatty acid two carbons shorter is formed. This is 3-ketoacyl-CoA thiolase from Stutzerimonas stutzeri (strain A1501) (Pseudomonas stutzeri).